A 238-amino-acid chain; its full sequence is uncharacterized protein (238 aa).

3 consecutive transmembrane segments (helical) span residues 19–39, 79–99, and 141–161; these read IVIE…FQII, IILF…AEFI, and YVEI…LIKC.

It localises to the cell membrane. This is an uncharacterized protein from Methanocaldococcus jannaschii (strain ATCC 43067 / DSM 2661 / JAL-1 / JCM 10045 / NBRC 100440) (Methanococcus jannaschii).